The primary structure comprises 670 residues: DNA ligase (670 aa).

Residues 33 to 37, 82 to 83, and Glu114 each bind NAD(+); these read DAEYD and SL. Lys116 (N6-AMP-lysine intermediate) is an active-site residue. Positions 137, 174, 291, and 315 each coordinate NAD(+). Residues Cys409, Cys412, Cys427, and Cys433 each coordinate Zn(2+). A BRCT domain is found at 593–670; that stretch reads GAELPLEGKT…TEQDLLELIN (78 aa).

It belongs to the NAD-dependent DNA ligase family. LigA subfamily. Mg(2+) is required as a cofactor. It depends on Mn(2+) as a cofactor.

It catalyses the reaction NAD(+) + (deoxyribonucleotide)n-3'-hydroxyl + 5'-phospho-(deoxyribonucleotide)m = (deoxyribonucleotide)n+m + AMP + beta-nicotinamide D-nucleotide.. In terms of biological role, DNA ligase that catalyzes the formation of phosphodiester linkages between 5'-phosphoryl and 3'-hydroxyl groups in double-stranded DNA using NAD as a coenzyme and as the energy source for the reaction. It is essential for DNA replication and repair of damaged DNA. The sequence is that of DNA ligase from Vibrio parahaemolyticus serotype O3:K6 (strain RIMD 2210633).